The primary structure comprises 287 residues: NAD-dependent protein deacylase sir-2.3 (287 aa).

A Deacetylase sirtuin-type domain is found at 10–287 (TELCENSLKK…YRISDVLKEM (278 aa)). NAD(+)-binding positions include 35–55 (GAGI…VGLY) and 116–119 (QNVD). H134 (proton acceptor) is an active-site residue. The Zn(2+) site is built by C142, C145, C196, and C199. NAD(+)-binding positions include 236 to 238 (GTS), 262 to 264 (NIG), and I280.

This sequence belongs to the sirtuin family. Class II subfamily. As to quaternary structure, interacts with pyc-1, pcca-1 and mccc-1. Requires Zn(2+) as cofactor. In terms of tissue distribution, ubiquitously expressed with high expression in the pharynx, body wall muscles and gonad. Strong expression in a subset of non-neuronal cells in the head.

The protein resides in the mitochondrion matrix. The protein localises to the mitochondrion. The catalysed reaction is N(6)-acetyl-L-lysyl-[protein] + NAD(+) + H2O = 2''-O-acetyl-ADP-D-ribose + nicotinamide + L-lysyl-[protein]. NAD-dependent protein deacylase. Catalyzes the NAD-dependent hydrolysis of acyl groups from lysine residues. Plays a role in oxidative stress resistance. Might promote neuronal cell death under ischemic conditions and cell death in touch neurons induced by mec-4 channel hyperactivation, possibly downstream of the insulin-like receptor daf-2. Might attenuate the reactive oxygen species (ROS) scavenging system, that eliminates ROS in ischemic conditions, under dietary deprivation and when glycolysis is blocked. The sequence is that of NAD-dependent protein deacylase sir-2.3 (sir-2.3) from Caenorhabditis elegans.